An 883-amino-acid polypeptide reads, in one-letter code: Glutamate receptor 2 (883 aa).

Residues 1–24 (MQKIMHISVLLSPVLWGLIFGVSS) form the signal peptide. The Extracellular portion of the chain corresponds to 25–543 (NSIQIGGLFP…GVFSFLDPLA (519 aa)). An intrachain disulfide couples Cys78 to Cys330. N-linked (GlcNAc...) asparagine glycosylation is found at Asn256, Asn370, Asn406, and Asn413. L-glutamate contacts are provided by Pro499, Thr501, and Arg506. A helical membrane pass occupies residues 544–564 (YEIWMCIVFAYIGVSVVLFLV). Topologically, residues 565-591 (SRFSPYEWHTEEFEDGRETQSSESTNE) are cytoplasmic. The helical; Pore-forming intramembrane region spans 592–607 (FGIFNSLWFSLGAFMQ). The stretch at 608-610 (QGC) is an intramembrane region. Cys610 carries the S-palmitoyl cysteine lipid modification. Residues 611 to 616 (DISPRS) lie on the Cytoplasmic side of the membrane. Residues 617 to 637 (LSGRIVGGVWWFFTLIIISSY) form a helical membrane-spanning segment. The Extracellular portion of the chain corresponds to 638–812 (TANLAAFLTV…EKTSALSLSN (175 aa)). The L-glutamate site is built by Ser675 and Thr676. Ser683 is modified (phosphoserine; by PKC). Ser717 is modified (phosphoserine; by PKG). L-glutamate is bound at residue Glu726. Cys739 and Cys794 are oxidised to a cystine. Residues 813–833 (VAGVFYILVGGLGLAMLVALI) form a helical membrane-spanning segment. At 834–883 (EFCYKSRAEAKRMKVAKNAQNINPSSSQNSQNFATYKEGYNVYGIESVKI) the chain is on the cytoplasmic side. Cys836 is lipidated: S-palmitoyl cysteine. Residues Ser860 and Ser863 each carry the phosphoserine modification. A required for interaction with IQSEC1 region spans residues 867–877 (ATYKEGYNVYG). Tyr876 carries the phosphotyrosine modification. Ser880 bears the Phosphoserine mark.

Belongs to the glutamate-gated ion channel (TC 1.A.10.1) family. GRIA2 subfamily. Homotetramer or heterotetramer of pore-forming glutamate receptor subunits. Tetramers may be formed by the dimerization of dimers. May interact with MPP4. Forms a ternary complex with GRIP1 and CSPG4. Interacts with ATAD1 in an ATP-dependent manner. ATAD1-catalyzed ATP hydrolysis disrupts binding to ATAD1 and to GRIP1 and leads to AMPAR complex disassembly. Interacts with GRIP1 and GRIP2. Interacts with NSF via its C-terminus. Isoform 1, but not isoform 3, interacts with PICK1. Interacts with CACNG2. Interacts with GRIA1 and SYNDIG1. Part of a complex containing GRIA2, NSF and NAPA and/or NAPB. Interacts with SNX27 (via PDZ domain); the interaction is required for recycling to the plasma membrane when endocytosed and prevent degradation in lysosomes. Interacts with LRFN1. Found in a complex with GRIA1, GRIA3, GRIA4, CNIH2, CNIH3, CACNG2, CACNG3, CACNG4, CACNG5, CACNG7 and CACNG8. Interacts with CACNG5. Interacts with OLFM2. Interacts with AP4B1, AP4E1 and AP4M1; probably indirect it mediates the somatodendritic localization of GRIA2 in neurons. Forms a complex with GRIP1, NSG1 and STX12; controls the intracellular fate of AMPAR and the endosomal sorting of the GRIA2 subunit toward recycling and membrane targeting. Interacts with IQSEC1; the interaction is required for ARF6 activation. Interacts (heterotetramer form) with CNIH2 and CNIH3; this interaction promotes expression at the plasma membrane and extensively modulates their gating properties by slowing deactivation and desensitization kinetics. In terms of processing, palmitoylated. Depalmitoylated upon L-glutamate stimulation. Cys-610 palmitoylation leads to Golgi retention and decreased cell surface expression. In contrast, Cys-836 palmitoylation does not affect cell surface expression but regulates stimulation-dependent endocytosis. Post-translationally, ubiquitinated by RNF167, leading to its degradation. Phosphorylation at Tyr-876 is required for interaction with IQSEC1 and ARF6 activation, which in turn triggers AMPAR internalization for persistent synaptic depression. In terms of processing, N-glycosylated.

The protein resides in the cell membrane. It is found in the postsynaptic cell membrane. It localises to the postsynaptic density membrane. The catalysed reaction is Ca(2+)(in) = Ca(2+)(out). The enzyme catalyses Na(+)(in) = Na(+)(out). Its function is as follows. Ionotropic glutamate receptor that functions as a ligand-gated cation channel, gated by L-glutamate and glutamatergic agonists such as alpha-amino-3-hydroxy-5-methyl-4-isoxazolepropionic acid (AMPA), quisqualic acid, and kainic acid. L-glutamate acts as an excitatory neurotransmitter at many synapses in the central nervous system and plays an important role in fast excitatory synaptic transmission. Binding of the excitatory neurotransmitter L-glutamate induces a conformation change, leading to the opening of the cation channel, and thereby converts the chemical signal to an electrical impulse upon entry of monovalent and divalent cations such as sodium and calcium. The receptor then desensitizes rapidly and enters in a transient inactive state, characterized by the presence of bound agonist. In the presence of CACNG4 or CACNG7 or CACNG8, shows resensitization which is characterized by a delayed accumulation of current flux upon continued application of L-glutamate. Through complex formation with NSG1, GRIP1 and STX12 controls the intracellular fate of AMPAR and the endosomal sorting of the GRIA2 subunit toward recycling and membrane targeting. This Homo sapiens (Human) protein is Glutamate receptor 2.